The primary structure comprises 333 residues: Phosphate acyltransferase (333 aa).

The protein belongs to the PlsX family. In terms of assembly, homodimer. Probably interacts with PlsY.

Its subcellular location is the cytoplasm. It carries out the reaction a fatty acyl-[ACP] + phosphate = an acyl phosphate + holo-[ACP]. It functions in the pathway lipid metabolism; phospholipid metabolism. Its function is as follows. Catalyzes the reversible formation of acyl-phosphate (acyl-PO(4)) from acyl-[acyl-carrier-protein] (acyl-ACP). This enzyme utilizes acyl-ACP as fatty acyl donor, but not acyl-CoA. This chain is Phosphate acyltransferase, found in Thermoanaerobacterium thermosaccharolyticum (strain ATCC 7956 / DSM 571 / NCIMB 9385 / NCA 3814 / NCTC 13789 / WDCM 00135 / 2032) (Clostridium thermosaccharolyticum).